Here is a 447-residue protein sequence, read N- to C-terminus: Protein disulfide-isomerase like 2-2 (447 aa).

The first 26 residues, 1–26 (MERKMYKSTVFPICCLLFALFDRGNA), serve as a signal peptide directing secretion. Thioredoxin domains follow at residues 27–139 (LYGS…QIKA) and 161–275 (KKKS…QLES). Residues Cys62 and Cys65 each act as nucleophile in the active site. Cys62 and Cys65 are joined by a disulfide. The tract at residues 146–170 (DGKTSGTKNGGGSSEKKKSEPSASV) is disordered. Asn173 carries an N-linked (GlcNAc...) asparagine glycan. Catalysis depends on nucleophile residues Cys197 and Cys200. Cys197 and Cys200 are oxidised to a cystine. The short motif at 444 to 447 (KDDL) is the Prevents secretion from ER element.

The protein belongs to the protein disulfide isomerase family. As to expression, widely expressed.

The protein localises to the endoplasmic reticulum lumen. The catalysed reaction is Catalyzes the rearrangement of -S-S- bonds in proteins.. Acts as a protein-folding catalyst that interacts with nascent polypeptides to catalyze the formation, isomerization, and reduction or oxidation of disulfide bonds. The chain is Protein disulfide-isomerase like 2-2 (PDIL2-2) from Arabidopsis thaliana (Mouse-ear cress).